Consider the following 255-residue polypeptide: Hemin import ATP-binding protein HmuV (255 aa).

In terms of domain architecture, ABC transporter spans 2-238; it reads LRAHNLHIRR…ESLKAVFGLE (237 aa). Residue 34 to 41 participates in ATP binding; it reads GPNGAGKS.

The protein belongs to the ABC transporter superfamily. Heme (hemin) importer (TC 3.A.1.14.5) family. As to quaternary structure, the complex is composed of two ATP-binding proteins (HmuV), two transmembrane proteins (HmuU) and a solute-binding protein (HmuT).

It is found in the cell inner membrane. Part of the ABC transporter complex HmuTUV involved in hemin import. Responsible for energy coupling to the transport system. The sequence is that of Hemin import ATP-binding protein HmuV from Pseudomonas fluorescens (strain Pf0-1).